A 214-amino-acid polypeptide reads, in one-letter code: Ribonuclease HII (214 aa).

The RNase H type-2 domain occupies 26-214 (EIVCGVDEAG…PVREAFDLIR (189 aa)). Positions 32, 33, and 124 each coordinate a divalent metal cation.

Belongs to the RNase HII family. Mn(2+) is required as a cofactor. The cofactor is Mg(2+).

It localises to the cytoplasm. It carries out the reaction Endonucleolytic cleavage to 5'-phosphomonoester.. Endonuclease that specifically degrades the RNA of RNA-DNA hybrids. This is Ribonuclease HII from Burkholderia mallei (strain NCTC 10247).